A 454-amino-acid polypeptide reads, in one-letter code: 3-phosphoshikimate 1-carboxyvinyltransferase (454 aa).

Residues Lys-39, Ser-40, and Arg-44 each contribute to the 3-phosphoshikimate site. Lys-39 contacts phosphoenolpyruvate. Residues Gly-112 and Arg-140 each contribute to the phosphoenolpyruvate site. Positions 185, 187, 333, and 360 each coordinate 3-phosphoshikimate. Gln-187 is a phosphoenolpyruvate binding site. Asp-333 (proton acceptor) is an active-site residue. Phosphoenolpyruvate is bound by residues Arg-364 and Arg-405.

It belongs to the EPSP synthase family. Monomer.

It localises to the cytoplasm. The enzyme catalyses 3-phosphoshikimate + phosphoenolpyruvate = 5-O-(1-carboxyvinyl)-3-phosphoshikimate + phosphate. Its pathway is metabolic intermediate biosynthesis; chorismate biosynthesis; chorismate from D-erythrose 4-phosphate and phosphoenolpyruvate: step 6/7. Catalyzes the transfer of the enolpyruvyl moiety of phosphoenolpyruvate (PEP) to the 5-hydroxyl of shikimate-3-phosphate (S3P) to produce enolpyruvyl shikimate-3-phosphate and inorganic phosphate. The polypeptide is 3-phosphoshikimate 1-carboxyvinyltransferase (Xylella fastidiosa (strain Temecula1 / ATCC 700964)).